The following is a 315-amino-acid chain: HTH-type transcriptional regulator TreR (315 aa).

Residues 5 to 59 (LTIKDIARLSGVGKSTVSRVLNNESGVSQLTRERVEAVMNQHGFSPSRSARAMRG) enclose the HTH lacI-type domain. A DNA-binding region (H-T-H motif) is located at residues 7–26 (IKDIARLSGVGKSTVSRVLN). Alpha,alpha-trehalose 6-phosphate-binding positions include 71–77 (RLDSLSE), glycine 126, arginine 147, 187–190 (DVTT), arginine 194, threonine 242, and tyrosine 284.

As to quaternary structure, homodimer.

Its function is as follows. Repressor of the treBC operon. It is able to bind trehalose-6-phosphate and trehalose. This chain is HTH-type transcriptional regulator TreR (treR), found in Escherichia coli (strain K12).